Consider the following 552-residue polypeptide: ATP synthase subunit alpha (552 aa).

Residue Gly173–Thr180 coordinates ATP. The segment at Ala526–Gly552 is disordered. Residues Ala533–Gly552 show a composition bias toward basic and acidic residues.

Belongs to the ATPase alpha/beta chains family. F-type ATPases have 2 components, CF(1) - the catalytic core - and CF(0) - the membrane proton channel. CF(1) has five subunits: alpha(3), beta(3), gamma(1), delta(1), epsilon(1). CF(0) has three main subunits: a(1), b(2) and c(9-12). The alpha and beta chains form an alternating ring which encloses part of the gamma chain. CF(1) is attached to CF(0) by a central stalk formed by the gamma and epsilon chains, while a peripheral stalk is formed by the delta and b chains.

The protein localises to the cell membrane. It carries out the reaction ATP + H2O + 4 H(+)(in) = ADP + phosphate + 5 H(+)(out). Its function is as follows. Produces ATP from ADP in the presence of a proton gradient across the membrane. The alpha chain is a regulatory subunit. This Frankia alni (strain DSM 45986 / CECT 9034 / ACN14a) protein is ATP synthase subunit alpha.